A 422-amino-acid polypeptide reads, in one-letter code: Calpain-2 catalytic subunit (422 aa).

The Calpain catalytic domain occupies 1 to 66 (QKLIRIRNPW…YSRLEICNLT (66 aa)). The active site involves Asn-8. The Ca(2+) site is built by Glu-14, Asp-21, and Glu-45. The domain III stretch occupies residues 67–236 (PDTLTSDTYK…KKADYQAVDD (170 aa)). A linker region spans residues 237–251 (EIEADLEEADVSEDD). The tract at residues 252-422 (IDDGFRRLFA…LISWLCFSVL (171 aa)) is domain IV. Ca(2+) contacts are provided by Ala-264, Asp-267, Glu-269, Glu-274, Asp-307, Asp-309, Thr-311, Lys-313, Glu-318, Asp-337, Asp-339, Ser-341, Thr-343, Glu-348, Asp-380, and Asn-383. 2 consecutive EF-hand domains span residues 294-327 (LSIETCKIMVDMLDSDGTGKLGLKEFYVLWTKIQ) and 324-359 (TKIQKYQKIYREIDVDRSGTMNSYEMRKALEEAGFK). The EF-hand 3 domain occupies 389–422 (VRLETLFKIFKQLDPDNTGMIQLDLISWLCFSVL).

The protein belongs to the peptidase C2 family. In terms of assembly, forms a heterodimer with a small (regulatory) subunit (CAPNS1). Interacts with CPEB3; this leads to cleavage of CPEB3. Ca(2+) serves as cofactor. Ubiquitous.

It is found in the cytoplasm. Its subcellular location is the cell membrane. It catalyses the reaction Broad endopeptidase specificity.. With respect to regulation, activated by 200-1000 micromolar concentrations of calcium and inhibited by calpastatin. Calcium-regulated non-lysosomal thiol-protease which catalyzes limited proteolysis of substrates involved in cytoskeletal remodeling and signal transduction. Proteolytically cleaves MYOC at 'Arg-226'. Proteolytically cleaves CPEB3 following neuronal stimulation which abolishes CPEB3 translational repressor activity, leading to translation of CPEB3 target mRNAs. The protein is Calpain-2 catalytic subunit (CAPN2) of Oryctolagus cuniculus (Rabbit).